The sequence spans 202 residues: ATP-dependent Clp protease proteolytic subunit (202 aa).

The Nucleophile role is filled by S101. H126 is a catalytic residue.

The protein belongs to the peptidase S14 family. As to quaternary structure, component of the chloroplastic Clp protease core complex.

It localises to the plastid. The protein resides in the chloroplast stroma. It carries out the reaction Hydrolysis of proteins to small peptides in the presence of ATP and magnesium. alpha-casein is the usual test substrate. In the absence of ATP, only oligopeptides shorter than five residues are hydrolyzed (such as succinyl-Leu-Tyr-|-NHMec, and Leu-Tyr-Leu-|-Tyr-Trp, in which cleavage of the -Tyr-|-Leu- and -Tyr-|-Trp bonds also occurs).. Functionally, cleaves peptides in various proteins in a process that requires ATP hydrolysis. Has a chymotrypsin-like activity. Plays a major role in the degradation of misfolded proteins. This chain is ATP-dependent Clp protease proteolytic subunit, found in Acorus calamus (Sweet flag).